The following is a 101-amino-acid chain: Urease subunit beta (101 aa).

The protein belongs to the urease beta subunit family. As to quaternary structure, heterotrimer of UreA (gamma), UreB (beta) and UreC (alpha) subunits. Three heterotrimers associate to form the active enzyme.

The protein resides in the cytoplasm. The enzyme catalyses urea + 2 H2O + H(+) = hydrogencarbonate + 2 NH4(+). The protein operates within nitrogen metabolism; urea degradation; CO(2) and NH(3) from urea (urease route): step 1/1. This is Urease subunit beta from Nostoc punctiforme (strain ATCC 29133 / PCC 73102).